The chain runs to 120 residues: U13-lycotoxin-Ls1a (120 aa).

The first 16 residues, 1-16 (MKTLFVLISILYAVYC), serve as a signal peptide directing secretion. A propeptide spanning residues 17–54 (FSSEEDVDSAYLANELEPVEDINSEQYAALEPKEEQER) is cleaved from the precursor. 4 cysteine pairs are disulfide-bonded: Cys-56/Cys-70, Cys-63/Cys-76, Cys-69/Cys-87, and Cys-78/Cys-85. Residues 56 to 95 (CADMGQDCKDDCDCCLNIATCNCWFGRYFCSCTFGDYQTC) form the Agouti domain.

The protein belongs to the neurotoxin 05 (agouti) family. In terms of processing, contains 6 disulfide bonds. Expressed by the venom gland.

Its subcellular location is the secreted. This chain is U13-lycotoxin-Ls1a, found in Lycosa singoriensis (Wolf spider).